Consider the following 1617-residue polypeptide: MDGQRQQTYIPAPPPPSATQPSQSHMLSLPPPPPRHLPTQPQGVMPPPPPGPPPGPPPGPGYGASKLANSQLQQQNNLGWQHNWARQALSQGFLPPPPPPPMVPTNQAYGRQTSFSVPNADGPITSATYVPGSNTFGAGVGIPGFDAHTRPSYEAYGTMSGSDRIRGPVHHLYESSGGDGSAYKRDGTVPPTPSARTMPSSLALHDNAQESVASSLPGATAQNHQSQTGQTNEPTKSPSHRQNNSNTLLGGMSPSEAAVQWPLDRVLLWLAKNGFSRDWQETFKTLQIEGADFLDIGHGANGRGNFNKMHNEVFPQLAKECEASGTGWDKERELGEGKRMRRLIRQIHDDDSFDVGIPAQKRRESQAPSEGAPDTSPKLSHEPQSAGPHSGTIENSPNLRAPQLAQPHRHSVQMRSVTLPIPTTHDIASSDFSQKDGISSRSDFSRSVLVGLGVDHRRQSPSMSSDNGNLVAPFRSYEDSPKSGSPATQHATLNQGLSSSSTGDLSVKYEHSRGNSSDSTMGRRYYESRKGQETIRPSPQEMCSRQWTGETSSSYPKEHKGIFNFLKKRSKGGDSTHPSPEEPNLESPTSPVNLRQNGPHLPYTKPSFNASDMSLGERPSSASMSDHERLRGKPAQKGKKWSFVTLDGWNYRLVDITDMDSVETLRAAICHNLGIADWASAQIFLTEPGQSDHEEPLNDTMLALCRRTKSDSIGSLKLFVRGTHLQPVPNHVPNFAGLGVPLPDKHTASPTHHLPRKPLDDEALSRIPPQPQTGPASPQLGIRPQQPKTPAAKFPARDAPQHTEGMSPVEGDQQVGISPEPDKADLLARHEEHKREVERKQKAYLSSKGPPQPRNDSYGETGYRRAGVIDFDERRVSPYEDKKADTLVPLRKPPSAPQESYTLTRINSLRKKDGDRPRAQPAVQTHGLGAVLASMGRMTSAIGTPAPSVPTPTSAGGKQTNFGSFGSPTQGNTKSAPQSSPEKESLDNPGNPAEHRHTKSTAPEIPKPTLQSRKSYGPEFDFEETEVSFQRSPRPQDDSDEDSDDGLFAIPLSNNKASTKENDSGSGTSEAQKRTEKPALTVNTESRLRKGLSVSFRSPSATRESFADANGDSGGREGASFLMAASPEDERPPPRRDSFARGDIWASRPPVEGVIDNLDDFFPDIDLDAPYLDGQGVSPPSSPANRAPPENDLHKKENQPSSSYTGEMNANAGDTLGSNEPTLKPQGGDVVARRNINRSGGGLTRGKSIREVAKGANQASRSRSIHTGNQKSGEILRRKSTKMFGAKIMQIKPKPGSRLSQLDPIPQNNTPSGVPQRQPTFRIIRGQLIGKGTYGRVYLGINADNGEVLAVKQVEINPRLAGQDTDRVKEMVAAMDQEIDTMQHLEHPNIVQYLGCERGEFSISIYLEYISGGSIGSCLRKHGKFEESVVKSLTRQTLSGLAYLHDQGILHRDLKADNILLDLDGTCKISDFGISKKTDDIYGNDSSNSMQGSVFWMAPEVIQSQGQGYSAKVDIWSLGCVVLEMFAGRRPWSKEEAIGAIFKLGSLSQAPPIPDDVSMTISPAALAFMYDCFTVPYRDSSERPTAQTLLTRHPFCEEDPNYNFLDTELYAKIRHVL.

Disordered regions lie at residues 1-73 (MDGQ…SQLQ), 167-199 (GPVHHLYESSGGDGSAYKRDGTVPPTPSARTMP), 211-253 (SVAS…GGMS), 345-399 (RQIH…SPNL), 455-555 (DHRR…SSSY), 568-633 (KRSK…LRGK), 739-820 (GVPL…ISPE), 832-1144 (EHKR…RGDI), and 1164-1277 (DIDL…EILR). The segment covering 19-28 (TQPSQSHMLS) has biased composition (low complexity). A compositionally biased stretch (pro residues) spans 44–60 (VMPPPPPGPPPGPPPGP). Residues 220–248 (TAQNHQSQTGQTNEPTKSPSHRQNNSNTL) show a composition bias toward polar residues. Positions 482–504 (KSGSPATQHATLNQGLSSSSTGD) are enriched in polar residues. The span at 524-533 (RYYESRKGQE) shows a compositional bias: basic and acidic residues. 2 stretches are compositionally biased toward polar residues: residues 535 to 555 (IRPSPQEMCSRQWTGETSSSY) and 586 to 596 (ESPTSPVNLRQ). Basic and acidic residues-rich tracts occupy residues 832–841 (EHKREVERKQ) and 871–885 (FDERRVSPYEDKKAD). 2 stretches are compositionally biased toward polar residues: residues 897–907 (PQESYTLTRIN) and 956–980 (GGKQTNFGSFGSPTQGNTKSAPQSS). Basic and acidic residues-rich tracts occupy residues 1128-1140 (EDERPPPRRDSFA) and 1189-1198 (PENDLHKKEN). Composition is skewed to polar residues over residues 1199 to 1208 (QPSSSYTGEM) and 1257 to 1272 (NQASRSRSIHTGNQKS). The Protein kinase domain occupies 1323-1596 (IIRGQLIGKG…QTLLTRHPFC (274 aa)). ATP contacts are provided by residues 1329–1337 (IGKGTYGRV) and K1352. D1453 serves as the catalytic Proton acceptor.

Belongs to the protein kinase superfamily. STE Ser/Thr protein kinase family. MAP kinase kinase subfamily.

The enzyme catalyses L-seryl-[protein] + ATP = O-phospho-L-seryl-[protein] + ADP + H(+). The catalysed reaction is L-threonyl-[protein] + ATP = O-phospho-L-threonyl-[protein] + ADP + H(+). Functionally, mitogen-activated kinase kinase kinase (MAPKKK), part of the cell wall integrity (CWI) signaling pathway composed by three protein kinases bck1, mkk2 and mpkA and responsible for the maintaining of cell-wall integrity balance. The CWI pathway also regulates the oxidative stress response, as well as the production of some secondary metabolites including pyomelanin. The chain is Mitogen-activated protein kinase kinae kinase bck1 from Aspergillus fumigatus (strain CBS 144.89 / FGSC A1163 / CEA10) (Neosartorya fumigata).